A 297-amino-acid polypeptide reads, in one-letter code: N-acetylmuramic acid 6-phosphate etherase (297 aa).

Residues alanine 55–lysine 218 enclose the SIS domain. Residue glutamate 83 is the Proton donor of the active site. Residue glutamate 114 is part of the active site.

This sequence belongs to the GCKR-like family. MurNAc-6-P etherase subfamily. As to quaternary structure, homodimer.

It carries out the reaction N-acetyl-D-muramate 6-phosphate + H2O = N-acetyl-D-glucosamine 6-phosphate + (R)-lactate. The protein operates within amino-sugar metabolism; 1,6-anhydro-N-acetylmuramate degradation. Its pathway is amino-sugar metabolism; N-acetylmuramate degradation. It functions in the pathway cell wall biogenesis; peptidoglycan recycling. In terms of biological role, specifically catalyzes the cleavage of the D-lactyl ether substituent of MurNAc 6-phosphate, producing GlcNAc 6-phosphate and D-lactate. Together with AnmK, is also required for the utilization of anhydro-N-acetylmuramic acid (anhMurNAc) either imported from the medium or derived from its own cell wall murein, and thus plays a role in cell wall recycling. The sequence is that of N-acetylmuramic acid 6-phosphate etherase from Salmonella choleraesuis (strain SC-B67).